Reading from the N-terminus, the 50-residue chain is Small integral membrane protein 46 (50 aa).

The chain crosses the membrane as a helical span at residues 15-37 (TTFQLWLQLLLWAHLAVRFLGYL).

The protein resides in the membrane. The sequence is that of Small integral membrane protein 46 from Homo sapiens (Human).